Here is a 94-residue protein sequence, read N- to C-terminus: Small ribosomal subunit protein uS19 (94 aa).

This sequence belongs to the universal ribosomal protein uS19 family.

Its function is as follows. Protein S19 forms a complex with S13 that binds strongly to the 16S ribosomal RNA. This Clostridium novyi (strain NT) protein is Small ribosomal subunit protein uS19.